Consider the following 481-residue polypeptide: MRLSPRAALSSPEIICSRCSQSCNNKELGIRIPRPLGQGPSRFVPEEEILQLASEDANMHSVFADAFTDLGRLDNITLVMVFHPQYLESFLKTQHYLLQMDGPLSPCYQHYIGIMAASRHQCSYLVNLHVNDFIHHGGDQKWLNGLENAPQKLRNLGELNKMLAHRPWLITKEHIKQLLKAGEHSWSLAELIHAIVLLAHYHSLASFTFGCGINPEIHSNGGHTFRPPSVSNYCICDITNGNHGTEGHLPVGIVMPTDSTCEVEALMVKMKQLQEGRDEEEASQEEMATRFEREKTESMVFSTEDEDPPPDIDVSRHFEDTSYGYKDFSRRGMHVPTFRVQDYSWEDHGYSLVNRLYPDVGQLLDEKFHIAYNLTYNTMAMHKDVDTSTLRRAVWNYVHCMFGIRYDDYDYGEINQLLDRSFKVYIKNVVCSPEKTSKRMYDGFWRQFKHSEKVHVNLLLMEARMQGELLYALRAITRYMT.

Residues 63 to 244 are N-terminal domain; may mediate the alkylhydroperoxide reductase activity; sequence FADAFTDLGR…ICDITNGNHG (182 aa). Cys122 functions as the Cysteine sulfenic acid (-SOH) intermediate in the catalytic mechanism. Residues 295 to 316 are disordered; the sequence is KTESMVFSTEDEDPPPDIDVSR. The interval 310 to 481 is C-terminal domain; mediates TORC1 regulation; it reads PDIDVSRHFE…ALRAITRYMT (172 aa). Residues 375–378, Thr387, and Glu452 each bind L-leucine; that span reads TYNT.

Belongs to the sestrin family.

The protein resides in the nucleus. Its subcellular location is the cytoplasm. It carries out the reaction a hydroperoxide + L-cysteinyl-[protein] = S-hydroxy-L-cysteinyl-[protein] + an alcohol. May function as an intracellular leucine sensor that negatively regulates the TORC1 signaling pathway through the GATOR complex. In absence of leucine, binds the GATOR subcomplex GATOR2 and prevents TORC1 signaling. Binding of leucine to SESN2 disrupts its interaction with GATOR2 thereby activating the TORC1 signaling pathway. This stress-inducible metabolic regulator may also play a role in protection against oxidative and genotoxic stresses. May prevent the accumulation of reactive oxygen species (ROS) through the alkylhydroperoxide reductase activity born by the N-terminal domain of the protein. This chain is Sestrin-1, found in Xenopus laevis (African clawed frog).